Reading from the N-terminus, the 335-residue chain is Glyceraldehyde-3-phosphate dehydrogenase (335 aa).

NAD(+) contacts are provided by residues 12 to 13, D34, and K79; that span reads RI. D-glyceraldehyde 3-phosphate contacts are provided by residues 150–152, T181, 210–211, and R233; these read SCT and TG. The active-site Nucleophile is the C151. NAD(+) is bound at residue N315.

This sequence belongs to the glyceraldehyde-3-phosphate dehydrogenase family. In terms of assembly, homotetramer.

The protein resides in the cytoplasm. The catalysed reaction is D-glyceraldehyde 3-phosphate + phosphate + NAD(+) = (2R)-3-phospho-glyceroyl phosphate + NADH + H(+). It functions in the pathway carbohydrate degradation; glycolysis; pyruvate from D-glyceraldehyde 3-phosphate: step 1/5. This Debaryomyces hansenii (strain ATCC 36239 / CBS 767 / BCRC 21394 / JCM 1990 / NBRC 0083 / IGC 2968) (Yeast) protein is Glyceraldehyde-3-phosphate dehydrogenase (GPD).